Here is a 504-residue protein sequence, read N- to C-terminus: Cytochrome P450 6B7 (504 aa).

C445 provides a ligand contact to heme.

This sequence belongs to the cytochrome P450 family. Heme serves as cofactor.

The protein resides in the endoplasmic reticulum membrane. It localises to the microsome membrane. The catalysed reaction is an organic molecule + reduced [NADPH--hemoprotein reductase] + O2 = an alcohol + oxidized [NADPH--hemoprotein reductase] + H2O + H(+). This chain is Cytochrome P450 6B7 (CYP6B7), found in Helicoverpa armigera (Cotton bollworm).